Reading from the N-terminus, the 329-residue chain is Sialic acid-binding periplasmic protein SiaP (329 aa).

The N-terminal stretch at 1–23 is a signal peptide; sequence MMKLTKLFLATAISLGVSSAVLA. The N-acetyl-beta-neuraminate site is built by Asn33, Asp72, Glu90, Arg150, Arg170, and Asn210.

The protein belongs to the bacterial solute-binding protein 7 family. The complex comprises the extracytoplasmic solute receptor protein SiaP, and the fused transmembrane protein SiaT.

It is found in the periplasm. Part of the tripartite ATP-independent periplasmic (TRAP) transport system SiaPT involved in the uptake of sialic acid (N-acetyl-beta-neuraminate). This protein specifically binds sialic acid with high affinity. N-Acetylneuraminate (sialic acid) can then be incorporated into the lipooligosaccharides (LOS) as a terminal non-reducing sugar, protecting the bacterium from complement-mediated killing by normal human serum. The polypeptide is Sialic acid-binding periplasmic protein SiaP (siaP) (Haemophilus influenzae (strain ATCC 51907 / DSM 11121 / KW20 / Rd)).